The primary structure comprises 225 residues: Phosphatidylserine decarboxylase proenzyme (225 aa).

S188 acts as the Schiff-base intermediate with substrate; via pyruvic acid in catalysis. A Pyruvic acid (Ser); by autocatalysis modification is found at S188.

This sequence belongs to the phosphatidylserine decarboxylase family. PSD-A subfamily. Heterodimer of a large membrane-associated beta subunit and a small pyruvoyl-containing alpha subunit. Requires pyruvate as cofactor. Is synthesized initially as an inactive proenzyme. Formation of the active enzyme involves a self-maturation process in which the active site pyruvoyl group is generated from an internal serine residue via an autocatalytic post-translational modification. Two non-identical subunits are generated from the proenzyme in this reaction, and the pyruvate is formed at the N-terminus of the alpha chain, which is derived from the carboxyl end of the proenzyme. The post-translation cleavage follows an unusual pathway, termed non-hydrolytic serinolysis, in which the side chain hydroxyl group of the serine supplies its oxygen atom to form the C-terminus of the beta chain, while the remainder of the serine residue undergoes an oxidative deamination to produce ammonia and the pyruvoyl prosthetic group on the alpha chain.

It is found in the cell membrane. The catalysed reaction is a 1,2-diacyl-sn-glycero-3-phospho-L-serine + H(+) = a 1,2-diacyl-sn-glycero-3-phosphoethanolamine + CO2. Its pathway is phospholipid metabolism; phosphatidylethanolamine biosynthesis; phosphatidylethanolamine from CDP-diacylglycerol: step 2/2. Catalyzes the formation of phosphatidylethanolamine (PtdEtn) from phosphatidylserine (PtdSer). This Parvibaculum lavamentivorans (strain DS-1 / DSM 13023 / NCIMB 13966) protein is Phosphatidylserine decarboxylase proenzyme.